The primary structure comprises 370 residues: Dual-specificity RNA methyltransferase RlmN (370 aa).

Glu-93 acts as the Proton acceptor in catalysis. Residues 99-337 (EEGRGTLCVS…VTTVRKTRGD (239 aa)) enclose the Radical SAM core domain. Cysteines 106 and 343 form a disulfide. [4Fe-4S] cluster contacts are provided by Cys-113, Cys-117, and Cys-120. Residues 167–168 (GE), Ser-199, 221–223 (SLH), and Asn-300 contribute to the S-adenosyl-L-methionine site. Cys-343 serves as the catalytic S-methylcysteine intermediate.

It belongs to the radical SAM superfamily. RlmN family. [4Fe-4S] cluster serves as cofactor.

Its subcellular location is the cytoplasm. It catalyses the reaction adenosine(2503) in 23S rRNA + 2 reduced [2Fe-2S]-[ferredoxin] + 2 S-adenosyl-L-methionine = 2-methyladenosine(2503) in 23S rRNA + 5'-deoxyadenosine + L-methionine + 2 oxidized [2Fe-2S]-[ferredoxin] + S-adenosyl-L-homocysteine. It carries out the reaction adenosine(37) in tRNA + 2 reduced [2Fe-2S]-[ferredoxin] + 2 S-adenosyl-L-methionine = 2-methyladenosine(37) in tRNA + 5'-deoxyadenosine + L-methionine + 2 oxidized [2Fe-2S]-[ferredoxin] + S-adenosyl-L-homocysteine. Specifically methylates position 2 of adenine 2503 in 23S rRNA and position 2 of adenine 37 in tRNAs. m2A2503 modification seems to play a crucial role in the proofreading step occurring at the peptidyl transferase center and thus would serve to optimize ribosomal fidelity. The polypeptide is Dual-specificity RNA methyltransferase RlmN (Francisella tularensis subsp. mediasiatica (strain FSC147)).